The sequence spans 508 residues: Photosystem II CP47 reaction center protein (508 aa).

Helical transmembrane passes span 21-36 (SVHI…WAGS), 101-115 (IVFS…IWHW), 140-156 (GIHL…FGAF), 203-218 (IAAG…FHLS), 237-252 (VLSS…AFVV), and 457-472 (TFAL…HGAR).

It belongs to the PsbB/PsbC family. PsbB subfamily. In terms of assembly, PSII is composed of 1 copy each of membrane proteins PsbA, PsbB, PsbC, PsbD, PsbE, PsbF, PsbH, PsbI, PsbJ, PsbK, PsbL, PsbM, PsbT, PsbX, PsbY, PsbZ, Psb30/Ycf12, at least 3 peripheral proteins of the oxygen-evolving complex and a large number of cofactors. It forms dimeric complexes. Binds multiple chlorophylls. PSII binds additional chlorophylls, carotenoids and specific lipids. is required as a cofactor.

It localises to the plastid. Its subcellular location is the chloroplast thylakoid membrane. Functionally, one of the components of the core complex of photosystem II (PSII). It binds chlorophyll and helps catalyze the primary light-induced photochemical processes of PSII. PSII is a light-driven water:plastoquinone oxidoreductase, using light energy to abstract electrons from H(2)O, generating O(2) and a proton gradient subsequently used for ATP formation. This Calycanthus floridus var. glaucus (Eastern sweetshrub) protein is Photosystem II CP47 reaction center protein.